Consider the following 472-residue polypeptide: Adenosylhomocysteinase (472 aa).

Substrate contacts are provided by threonine 60, aspartate 136, and glutamate 197. Residue 198–200 (TTT) participates in NAD(+) binding. Residues lysine 227 and aspartate 231 each contribute to the substrate site. NAD(+)-binding positions include asparagine 232, 261 to 266 (GYGDVG), glutamate 284, asparagine 319, 340 to 342 (IGH), and asparagine 388.

It belongs to the adenosylhomocysteinase family. Requires NAD(+) as cofactor.

The protein localises to the cytoplasm. The enzyme catalyses S-adenosyl-L-homocysteine + H2O = L-homocysteine + adenosine. It functions in the pathway amino-acid biosynthesis; L-homocysteine biosynthesis; L-homocysteine from S-adenosyl-L-homocysteine: step 1/1. Functionally, may play a key role in the regulation of the intracellular concentration of adenosylhomocysteine. The polypeptide is Adenosylhomocysteinase (Maridesulfovibrio salexigens (strain ATCC 14822 / DSM 2638 / NCIMB 8403 / VKM B-1763) (Desulfovibrio salexigens)).